The following is a 404-amino-acid chain: MHSKPQRALVIGATGVSGWSLCLQLLQTQTPSAFESVDLLTNRPVSLSDAQWPTDSRLRVHSGIDLNRTSEEVIGSFRGIPDIGEITHVFYVACGMSPTYDFAETAKINVQMTKAALDAIEAVAVCTKHISFQAGSIVYGIPFADWLGDNFRPGPFNESFARVPPPFSDMVSHYRQEDYVKAMADKNSWTWSSIRPDTIIGFTPRNSPHCLSVSLGLYFAFYRYVYGKGAVLHFPGSESAWKADFTVIGQDQLARFHIFTSTHAASNGTPGALNISNGETTSWEQIWPKIVQYFDLVGAPPEPKMAEGDSDDASSPRFGPEWFQGVTAKATEFEAEYGLQPDFVTNIAWQYLTFLLNLKIDRVLDIEKARDLGFLESSNTVSDFEKSWDHMRKARIIPSVEQSD.

The N-terminal stretch at 1 to 28 (MHSKPQRALVIGATGVSGWSLCLQLLQT) is a signal peptide. 2 residues coordinate NADP(+): serine 56 and leucine 58. N-linked (GlcNAc...) asparagine glycosylation is found at asparagine 67 and asparagine 157. Residue serine 237 is the Proton donor of the active site. Asparagine 274 is a glycosylation site (N-linked (GlcNAc...) asparagine). Residue valine 291 coordinates NADP(+).

Belongs to the short-chain dehydrogenases/reductases (SDR) family. Highly divergent.

It participates in mycotoxin biosynthesis. Its function is as follows. Short chain dehydrogenase; part of the gene cluster that mediates the biosynthesis of sirodesmin PL, an epipolythiodioxopiperazine (ETP) characterized by a disulfide bridged cyclic dipeptide and that acts as a phytotoxin which is involved in the blackleg didease of canola. SirD catalyzes the O-prenylation of L-tyrosine (L-Tyr) in the presence of dimethylallyl diphosphate (DMAPP) to yield 4-O-dimethylallyl-L-Tyr, and therefore represents probably the first pathway-specific enzyme in the biosynthesis of sirodesmin PL. 4-O-dimethylallyl-L-Tyr, then undergoes condensation with L-Ser in a reaction catalyzed by the non-ribosomal peptide synthase sirP to form the diketopiperazine (DKP) backbone. Further bishydroxylation of the DKP performed by the cytochrome P450 monooxygenase sirC leads to the production of the intermediate phomamide. This step is essential to form the reactive thiol group required for toxicity of sirodesmin PL. The next steps of sirodesmin biosynthesis are not well understood yet, but some predictions could be made from intermediate compounds identification. Phomamide is converted into phomalizarine via oxidation, probably by sirT. Further oxidation, methylation (by sirM or sirN) and reduction steps convert phomalizarine to deacetyl sirodesmin. Finally, acetyltransferase sirH probably acetylates deacetyl sirodesmin to produce sirodesmin PL. This Leptosphaeria maculans (Blackleg fungus) protein is Short chain dehydrogenase sirR.